The chain runs to 572 residues: Dihydroxy-acid dehydratase (572 aa).

Position 57 (cysteine 57) interacts with [2Fe-2S] cluster. Mg(2+) is bound at residue aspartate 89. Cysteine 130 contacts [2Fe-2S] cluster. Residues aspartate 131 and lysine 132 each contribute to the Mg(2+) site. The residue at position 132 (lysine 132) is an N6-carboxylysine. Cysteine 202 contacts [2Fe-2S] cluster. A Mg(2+)-binding site is contributed by glutamate 453. Serine 479 acts as the Proton acceptor in catalysis.

This sequence belongs to the IlvD/Edd family. Homodimer. [2Fe-2S] cluster serves as cofactor. The cofactor is Mg(2+).

The catalysed reaction is (2R)-2,3-dihydroxy-3-methylbutanoate = 3-methyl-2-oxobutanoate + H2O. It catalyses the reaction (2R,3R)-2,3-dihydroxy-3-methylpentanoate = (S)-3-methyl-2-oxopentanoate + H2O. It participates in amino-acid biosynthesis; L-isoleucine biosynthesis; L-isoleucine from 2-oxobutanoate: step 3/4. The protein operates within amino-acid biosynthesis; L-valine biosynthesis; L-valine from pyruvate: step 3/4. Functions in the biosynthesis of branched-chain amino acids. Catalyzes the dehydration of (2R,3R)-2,3-dihydroxy-3-methylpentanoate (2,3-dihydroxy-3-methylvalerate) into 2-oxo-3-methylpentanoate (2-oxo-3-methylvalerate) and of (2R)-2,3-dihydroxy-3-methylbutanoate (2,3-dihydroxyisovalerate) into 2-oxo-3-methylbutanoate (2-oxoisovalerate), the penultimate precursor to L-isoleucine and L-valine, respectively. This chain is Dihydroxy-acid dehydratase, found in Streptococcus sanguinis (strain SK36).